The chain runs to 162 residues: Ribosomal RNA large subunit methyltransferase H (162 aa).

Glycine 108 lines the S-adenosyl-L-methionine pocket.

The protein belongs to the RNA methyltransferase RlmH family. In terms of assembly, homodimer.

It localises to the cytoplasm. The enzyme catalyses pseudouridine(1915) in 23S rRNA + S-adenosyl-L-methionine = N(3)-methylpseudouridine(1915) in 23S rRNA + S-adenosyl-L-homocysteine + H(+). Functionally, specifically methylates the pseudouridine at position 1915 (m3Psi1915) in 23S rRNA. The sequence is that of Ribosomal RNA large subunit methyltransferase H from Methylobacterium nodulans (strain LMG 21967 / CNCM I-2342 / ORS 2060).